A 130-amino-acid chain; its full sequence is Phosphoribosyl-AMP cyclohydrolase (130 aa).

Asp77 is a Mg(2+) binding site. Residue Cys78 coordinates Zn(2+). Residues Asp79 and Asp81 each contribute to the Mg(2+) site. Residues Cys95 and Cys102 each contribute to the Zn(2+) site.

It belongs to the PRA-CH family. Homodimer. The cofactor is Mg(2+). It depends on Zn(2+) as a cofactor.

The protein localises to the cytoplasm. The enzyme catalyses 1-(5-phospho-beta-D-ribosyl)-5'-AMP + H2O = 1-(5-phospho-beta-D-ribosyl)-5-[(5-phospho-beta-D-ribosylamino)methylideneamino]imidazole-4-carboxamide. It functions in the pathway amino-acid biosynthesis; L-histidine biosynthesis; L-histidine from 5-phospho-alpha-D-ribose 1-diphosphate: step 3/9. Catalyzes the hydrolysis of the adenine ring of phosphoribosyl-AMP. In Pseudomonas savastanoi pv. phaseolicola (strain 1448A / Race 6) (Pseudomonas syringae pv. phaseolicola (strain 1448A / Race 6)), this protein is Phosphoribosyl-AMP cyclohydrolase.